The primary structure comprises 112 residues: Truncated ankyrin repeat protein B25 (112 aa).

It belongs to the orthopoxviruses B25 protein family.

This Bos taurus (Bovine) protein is Truncated ankyrin repeat protein B25.